The chain runs to 305 residues: Ribonuclease BN (305 aa).

Positions 63, 65, 67, 68, 141, 212, and 270 each coordinate Zn(2+). Aspartate 67 acts as the Proton acceptor in catalysis.

Belongs to the RNase Z family. RNase BN subfamily. In terms of assembly, homodimer. Zn(2+) serves as cofactor.

In terms of biological role, zinc phosphodiesterase, which has both exoribonuclease and endoribonuclease activities. This is Ribonuclease BN from Proteus mirabilis (strain HI4320).